Reading from the N-terminus, the 250-residue chain is DNA repair protein RecO (250 aa).

It belongs to the RecO family.

In terms of biological role, involved in DNA repair and RecF pathway recombination. The polypeptide is DNA repair protein RecO (Rhodopseudomonas palustris (strain ATCC BAA-98 / CGA009)).